The chain runs to 246 residues: MVVGPSCQPPCGLCLLLLFLLALPLRSQASAGCYGIPGMPGMPGAPGKDGHDGLQGPKGEPGIPAVPGTRGPKGQKGEPGMPGHRGKNGPRGTSGLPGDPGPRGPPGEPGVEGRYKQKHQSVFTVTRQTTQYPEANALVRFNSVVTNPQGHYNPSTGKFTCEVPGLYYFVYYTSHTANLCVHLNLNLARVASFCDHMFNSKQVSSGGVLLRLQRGDEVWLSVNDYNGMVGIEGSNSVFSGFLLFPD.

A signal peptide spans 1–29 (MVVGPSCQPPCGLCLLLLFLLALPLRSQA). The region spanning 32–113 (GCYGIPGMPG…GPPGEPGVEG (82 aa)) is the Collagen-like domain. 5 positions are modified to 4-hydroxyproline: Pro-37, Pro-40, Pro-43, Pro-46, and Pro-64. The disordered stretch occupies residues 44–116 (GAPGKDGHDG…GEPGVEGRYK (73 aa)). Position 76 is a 5-hydroxylysine (Lys-76). O-linked (Gal...) hydroxylysine glycosylation occurs at Lys-76. Residues Pro-82, Pro-97, Pro-100, and Pro-106 each carry the 4-hydroxyproline modification. Over residues 99 to 108 (DPGPRGPPGE) the composition is skewed to pro residues. The C1q domain occupies 116-246 (KQKHQSVFTV…VFSGFLLFPD (131 aa)). Cys-180 and Cys-194 are oxidised to a cystine.

Core component of the complement C1 complex, a calcium-dependent complex composed of 1 molecule of the C1Q subcomplex, 2 molecules of C1R and 2 molecules of C1S. The C1Q subcomplex is composed 18 subunits: 3 chains of C1QA, C1QB, and C1QC trimerize to form 6 collagen-like triple helices connected to six globular ligand-recognition modules (C1q domain). O-linked glycans consist of Glc-Gal disaccharides bound to the oxygen atom of post-translationally added hydroxyl groups.

The protein localises to the secreted. It is found in the cell surface. Its activity is regulated as follows. The C1Q subcomplex is inhibited by sulfated molecules, such as triterpenoid sulfates, heparan sulfate, or chondroitin sulfates. Functionally, core component of the complement C1 complex, a multiprotein complex that initiates the classical pathway of the complement system, a cascade of proteins that leads to phagocytosis and breakdown of pathogens and signaling that strengthens the adaptive immune system. The classical complement pathway is initiated by the C1Q subcomplex of the C1 complex, which specifically binds IgG or IgM immunoglobulins complexed with antigens, forming antigen-antibody complexes on the surface of pathogens: C1QA, together with C1QB and C1QC, specifically recognizes and binds the Fc regions of IgG or IgM via its C1q domain. Immunoglobulin-binding activates the proenzyme C1R, which cleaves C1S, initiating the proteolytic cascade of the complement system. The C1Q subcomplex is activated by a hexamer of IgG complexed with antigens, while it is activated by a pentameric IgM. The C1Q subcomplex also recognizes and binds phosphatidylserine exposed on the surface of cells undergoing programmed cell death, possibly promoting activation of the complement system. The polypeptide is Complement C1q subcomponent subunit C (Mus musculus (Mouse)).